We begin with the raw amino-acid sequence, 462 residues long: Calcitonin gene-related peptide type 1 receptor (462 aa).

The signal sequence occupies residues 1–22; sequence MEKKFFLSFLFLLPFFMILVIA. Residues 23–140 lie on the Extracellular side of the membrane; sequence ESEEENPDDL…NTHEKVKTAL (118 aa). 3 disulfides stabilise this stretch: Cys-49-Cys-75, Cys-66-Cys-106, and Cys-89-Cys-128. N-linked (GlcNAc...) asparagine glycosylation is found at Asn-67, Asn-119, and Asn-124. Residues 141–165 traverse the membrane as a helical segment; sequence NLFYLTIIGHVLSIASLLISLGIFF. At 166-176 the chain is on the cytoplasmic side; the sequence is YFKSLSCQRIT. The helical transmembrane segment at 177-199 threads the bilayer; it reads LHKNLFFSFVCNSVITIIHLTAV. The Extracellular portion of the chain corresponds to 200 to 210; it reads ANNQALVATNP. Residues 211-239 traverse the membrane as a helical segment; the sequence is VSCKVSQFIHLYLMGCNYFWMLCEGIYLH. Topologically, residues 240-253 are cytoplasmic; that stretch reads TLVVVAVFAEKQHL. Residues 254–274 traverse the membrane as a helical segment; sequence MWYYFLGWGFPLIPACIHAVA. Over 275–290 the chain is Extracellular; the sequence is RRLYYNDNCWISSDTQ. Residues 289-290 are required for RAMP3 interaction; the sequence is TQ. The chain crosses the membrane as a helical span at residues 291-315; it reads LLYIIHGPICAALLVNLFFLLNIVR. At 316–330 the chain is on the cytoplasmic side; it reads VLITKLKVTHQAESN. Residues 331–352 form a helical membrane-spanning segment; sequence LYMKAVRATLILVPLLGIEFVL. At 353-367 the chain is on the extracellular side; it reads IPWRPEGKIAEEIYD. A helical membrane pass occupies residues 368–388; the sequence is YIINILMHYQGLLVSTIFCFF. Residues 389-462 are Cytoplasmic-facing; it reads NGEVQAILRR…VVIKPEKLYD (74 aa). Residues Ser-421 and Ser-446 each carry the phosphoserine modification.

It belongs to the G-protein coupled receptor 2 family. In terms of assembly, heterodimer of CALCRL and RAMP1; the receptor complex functions as CGRP receptor. Heterodimer of CALCRL and RAMP2 or CALCRL and RAMP3; the complexes function as adrenomedullin receptor.

It is found in the cell membrane. Functionally, g protein-coupled receptor which specificity is determined by its interaction with receptor-activity-modifying proteins (RAMPs). Together with RAMP1, form the receptor complex for calcitonin-gene-related peptides CALCA/CGRP1 and CALCB/CGRP2. Together with RAMP2 or RAMP3, function as receptor complexes for adrenomedullin (ADM and ADM2). Ligand binding causes a conformation change that triggers signaling via guanine nucleotide-binding proteins (G proteins) and modulates the activity of downstream effectors. Activates cAMP-dependent pathway. The protein is Calcitonin gene-related peptide type 1 receptor (CALCRL) of Bos taurus (Bovine).